Here is a 122-residue protein sequence, read N- to C-terminus: Small ribosomal subunit protein uS13 (122 aa).

Positions 92–122 (HRNGLPVRGQRTHTNARTRKGKAKPIAGKKK) are disordered. The span at 101–122 (QRTHTNARTRKGKAKPIAGKKK) shows a compositional bias: basic residues.

This sequence belongs to the universal ribosomal protein uS13 family. As to quaternary structure, part of the 30S ribosomal subunit. Forms a loose heterodimer with protein S19. Forms two bridges to the 50S subunit in the 70S ribosome.

In terms of biological role, located at the top of the head of the 30S subunit, it contacts several helices of the 16S rRNA. In the 70S ribosome it contacts the 23S rRNA (bridge B1a) and protein L5 of the 50S subunit (bridge B1b), connecting the 2 subunits; these bridges are implicated in subunit movement. Contacts the tRNAs in the A and P-sites. The protein is Small ribosomal subunit protein uS13 of Erythrobacter litoralis (strain HTCC2594).